The sequence spans 272 residues: GTP cyclohydrolase FolE2 (272 aa).

Belongs to the GTP cyclohydrolase IV family.

It catalyses the reaction GTP + H2O = 7,8-dihydroneopterin 3'-triphosphate + formate + H(+). The protein operates within cofactor biosynthesis; 7,8-dihydroneopterin triphosphate biosynthesis; 7,8-dihydroneopterin triphosphate from GTP: step 1/1. Its function is as follows. Converts GTP to 7,8-dihydroneopterin triphosphate. The protein is GTP cyclohydrolase FolE2 of Polynucleobacter asymbioticus (strain DSM 18221 / CIP 109841 / QLW-P1DMWA-1) (Polynucleobacter necessarius subsp. asymbioticus).